The primary structure comprises 220 residues: Dual specificity phosphatase 29 (220 aa).

The segment covering 1-15 has biased composition (polar residues); that stretch reads MTSGEVKTSLKNAYS. A disordered region spans residues 1–29; sequence MTSGEVKTSLKNAYSSAKRLSPKMEEEGE. The 149-residue stretch at 54–202 folds into the Tyrosine-protein phosphatase domain; it reads HVNEVWPKLY…LRELDKQLVQ (149 aa). Residue 146 to 153 coordinates substrate; that stretch reads HCVMGRSR. The active-site Phosphocysteine intermediate is the Cys-147.

The protein belongs to the protein-tyrosine phosphatase family. Non-receptor class dual specificity subfamily. Homodimer. Interacts with PRKAA2.

The protein localises to the cytoplasm. Its subcellular location is the nucleus. It catalyses the reaction O-phospho-L-tyrosyl-[protein] + H2O = L-tyrosyl-[protein] + phosphate. The catalysed reaction is O-phospho-L-seryl-[protein] + H2O = L-seryl-[protein] + phosphate. It carries out the reaction O-phospho-L-threonyl-[protein] + H2O = L-threonyl-[protein] + phosphate. Its function is as follows. Dual specificity phosphatase able to dephosphorylate phosphotyrosine, phosphoserine and phosphothreonine residues within the same substrate, with a preference for phosphotyrosine as a substrate. Involved in the modulation of intracellular signaling cascades. In skeletal muscle regulates systemic glucose homeostasis by activating, AMPK, an energy sensor protein kinase. Affects MAP kinase signaling though modulation of the MAPK1/2 cascade in skeletal muscle promoting muscle cell differentiation, development and atrophy. This Homo sapiens (Human) protein is Dual specificity phosphatase 29.